Reading from the N-terminus, the 167-residue chain is Insertion element IS1 1 protein InsB (167 aa).

The protein belongs to the transposase 27 family.

In terms of biological role, absolutely required for transposition of IS1. The polypeptide is Insertion element IS1 1 protein InsB (insB1) (Escherichia coli (strain K12)).